A 299-amino-acid chain; its full sequence is ATP phosphoribosyltransferase (299 aa).

Belongs to the ATP phosphoribosyltransferase family. Long subfamily. Equilibrium between an active dimeric form, an inactive hexameric form and higher aggregates. Interconversion between the various forms is largely reversible and is influenced by the natural substrates and inhibitors of the enzyme. The cofactor is Mg(2+).

It localises to the cytoplasm. The enzyme catalyses 1-(5-phospho-beta-D-ribosyl)-ATP + diphosphate = 5-phospho-alpha-D-ribose 1-diphosphate + ATP. It functions in the pathway amino-acid biosynthesis; L-histidine biosynthesis; L-histidine from 5-phospho-alpha-D-ribose 1-diphosphate: step 1/9. Its activity is regulated as follows. Feedback inhibited by histidine. Its function is as follows. Catalyzes the condensation of ATP and 5-phosphoribose 1-diphosphate to form N'-(5'-phosphoribosyl)-ATP (PR-ATP). Has a crucial role in the pathway because the rate of histidine biosynthesis seems to be controlled primarily by regulation of HisG enzymatic activity. The chain is ATP phosphoribosyltransferase from Buchnera aphidicola subsp. Schlechtendalia chinensis.